We begin with the raw amino-acid sequence, 1801 residues long: Sperm flagellar protein 2 (1801 aa).

One can recognise a Calponin-homology (CH) domain in the interval 1 to 105 (MSEILCQWLN…LLYQLYIALQ (105 aa)). Coiled-coil stretches lie at residues 176–260 (EKFE…KDLQ) and 321–395 (AHEA…TKQA). The segment at 632 to 659 (QDKNELTDTQVPGEAAPQKEGTKSSDFE) is disordered. 2 coiled-coil regions span residues 722 to 748 (NQAK…KAQM) and 869 to 895 (ATEV…SAVS). Basic and acidic residues-rich tracts occupy residues 883–892 (LEEKETEKKS) and 909–918 (EAEKEKEVHQ). The disordered stretch occupies residues 883 to 949 (LEEKETEKKS…KISVKKSPID (67 aa)). The stretch at 1051–1077 (EDLWEDEETKAELHQRVNDLRDRLWDI) forms a coiled coil. 2 stretches are compositionally biased toward basic and acidic residues: residues 1233–1250 (RLAE…KEKS) and 1261–1295 (KEKE…AEKK). Disordered regions lie at residues 1233–1304 (RLAE…SPVV), 1651–1695 (KTSI…NANT), and 1781–1801 (SEHA…DEKK). Positions 1252–1286 (QSGTNKKAKKEKEQAKKEKEQAKKEKEQAKKEKEP) form a coiled coil. The segment at 1305-1657 (EVSPVTITPE…TAEKTSISSV (353 aa)) is interaction with IFT20. A coiled-coil region spans residues 1665–1695 (EAEENSTREELKEEKDERDQKEEEIPENANT). Residues 1669 to 1687 (NSTREELKEEKDERDQKEE) are compositionally biased toward basic and acidic residues.

Interacts (via C-terminus) with IFT20. Interacts with DYNC1I2. In terms of tissue distribution, predominantly expressed in ciliated tissues such as lung, trachea, testis, brain, and at lower levels in kidney and spleen.

The protein localises to the cell projection. It is found in the cilium. Its subcellular location is the flagellum. The protein resides in the cytoplasm. It localises to the golgi apparatus. Functionally, required for correct axoneme development in spermatozoa. Important for normal development of the manchette and sperm head morphology. Essential for male fertility. Plays a role in localization of the intraflagellar transport protein IFT20 to the manchette, suggesting function as an adapter for dynein-mediated protein transport during spermatogenesis. Also plays a role in bone growth where it seems to be required for normal osteoblast differentiation. In Rattus norvegicus (Rat), this protein is Sperm flagellar protein 2 (Spef2).